The following is a 231-amino-acid chain: Putative S-adenosylmethionine-dependent methyltransferase RcsF (231 aa).

Positions 5-142 (VSPIGYIRSC…YVPYADAVAD (138 aa)) constitute a TsaA-like domain. S-adenosyl-L-methionine contacts are provided by residues 22 to 24 (PRQ), 63 to 64 (HQ), arginine 91, and 122 to 125 (LDGT).

The protein belongs to the tRNA methyltransferase O family.

This is Putative S-adenosylmethionine-dependent methyltransferase RcsF (rcsF) from Pseudomonas aeruginosa (strain ATCC 15692 / DSM 22644 / CIP 104116 / JCM 14847 / LMG 12228 / 1C / PRS 101 / PAO1).